We begin with the raw amino-acid sequence, 331 residues long: Phosphoenolpyruvate transferase (331 aa).

Residue Asp-63 coordinates 7,8-didemethyl-8-hydroxy-5-deazariboflavin.

The protein belongs to the CofD family. As to quaternary structure, homodimer. The cofactor is Mg(2+).

The catalysed reaction is enolpyruvoyl-2-diphospho-5'-guanosine + 7,8-didemethyl-8-hydroxy-5-deazariboflavin = dehydro coenzyme F420-0 + GMP + H(+). The protein operates within cofactor biosynthesis; coenzyme F420 biosynthesis. In terms of biological role, catalyzes the transfer of the phosphoenolpyruvate moiety from enoylpyruvoyl-2-diphospho-5'-guanosine (EPPG) to 7,8-didemethyl-8-hydroxy-5-deazariboflavin (FO) with the formation of dehydro coenzyme F420-0 and GMP. This chain is Phosphoenolpyruvate transferase, found in Mycobacterium sp. (strain JLS).